We begin with the raw amino-acid sequence, 488 residues long: Serine hydroxymethyltransferase, mitochondrial (488 aa).

The N-terminal 20 residues, 1–20 (MAVLRQFVKNSYSSIPKRFY), are a transit peptide targeting the mitochondrion. Lys265 is modified (N6-(pyridoxal phosphate)lysine).

The protein belongs to the SHMT family. In terms of assembly, homotetramer. The cofactor is pyridoxal 5'-phosphate.

Its subcellular location is the mitochondrion. The catalysed reaction is (6R)-5,10-methylene-5,6,7,8-tetrahydrofolate + glycine + H2O = (6S)-5,6,7,8-tetrahydrofolate + L-serine. It functions in the pathway one-carbon metabolism; tetrahydrofolate interconversion. Its function is as follows. Interconversion of serine and glycine. The chain is Serine hydroxymethyltransferase, mitochondrial (shm2) from Schizosaccharomyces pombe (strain 972 / ATCC 24843) (Fission yeast).